Reading from the N-terminus, the 27-residue chain is Delta-actitoxin-Avd2a (27 aa).

3 disulfide bridges follow: Cys-3-Cys-17, Cys-4-Cys-11, and Cys-6-Cys-22.

It belongs to the sea anemone short toxin (type III) family.

The protein resides in the secreted. It localises to the nematocyst. Specific arthropod (crab and insect) toxin that inhibits inactivation of voltage-gated sodium channels. It competes well with the site-3 toxin LqhalphaIT (from the scorpion L.quinquestriatus (AC P17728)) on binding to cockroach neuronal membranes (Ki=21.4 nM), and inhibits the inactivation of D.melanogaster channel (DmNav1), but not that of mammalian Navs expressed in Xenopus oocytes. Its activity is synergically enhanced by ligands of receptor site-4 (Bj-xtrIT (AC P56637)). Its ability to inhibit the channel mutant DmNav1[D1701R] only decreases 5-fold, whereas the inhibition activity is completely lost by LqhalphaIT and Av2 when tested on DmNav1[D1701R]. In Anemonia sulcata (Mediterranean snakelocks sea anemone), this protein is Delta-actitoxin-Avd2a.